A 189-amino-acid chain; its full sequence is Elongation factor P (189 aa).

It belongs to the elongation factor P family.

It is found in the cytoplasm. The protein operates within protein biosynthesis; polypeptide chain elongation. Involved in peptide bond synthesis. Stimulates efficient translation and peptide-bond synthesis on native or reconstituted 70S ribosomes in vitro. Probably functions indirectly by altering the affinity of the ribosome for aminoacyl-tRNA, thus increasing their reactivity as acceptors for peptidyl transferase. This Campylobacter jejuni subsp. doylei (strain ATCC BAA-1458 / RM4099 / 269.97) protein is Elongation factor P.